We begin with the raw amino-acid sequence, 1588 residues long: Pentafunctional AROM polypeptide (1588 aa).

The tract at residues 1 to 392 is 3-dehydroquinate synthase; the sequence is MVQLAKVPIL…YGDSAQFVSD (392 aa). NAD(+) is bound by residues 43-45, 78-81, 109-111, and Asp114; these read DTN, ETSK, and GGV. Arg125 lines the 7-phospho-2-dehydro-3-deoxy-D-arabino-heptonate pocket. Residue 134–135 coordinates NAD(+); it reads TS. 7-phospho-2-dehydro-3-deoxy-D-arabino-heptonate-binding residues include Asp141 and Lys147. Lys156 lines the NAD(+) pocket. Position 157 (Asn157) interacts with 7-phospho-2-dehydro-3-deoxy-D-arabino-heptonate. NAD(+) contacts are provided by residues 174-177 and Asn185; that span reads WLET. A Zn(2+)-binding site is contributed by Glu189. Residues 189 to 192 and Lys258 contribute to the 7-phospho-2-dehydro-3-deoxy-D-arabino-heptonate site; that span reads EVIK. Glu268 acts as the Proton acceptor; for 3-dehydroquinate synthase activity in catalysis. Residues 272-276 and His279 each bind 7-phospho-2-dehydro-3-deoxy-D-arabino-heptonate; that span reads RNLLN. His279 lines the Zn(2+) pocket. The Proton acceptor; for 3-dehydroquinate synthase activity role is filled by His283. Positions 295 and 364 each coordinate 7-phospho-2-dehydro-3-deoxy-D-arabino-heptonate. Residue His295 participates in Zn(2+) binding. An EPSP synthase region spans residues 405 to 871; that stretch reads VYPFKDIPAD…WDVLHSELGA (467 aa). Cys853 serves as the catalytic For EPSP synthase activity. Residues 890 to 1080 form a shikimate kinase region; the sequence is SVVIIGMRAA…IPSGRSAFVC (191 aa). 895-902 lines the ATP pocket; it reads GMRAAGKT. A 3-dehydroquinase region spans residues 1081–1293; that stretch reads LTFDDLTEQT…AAPGQLTVAQ (213 aa). The active-site Proton acceptor; for 3-dehydroquinate dehydratase activity is the His1198. The active-site Schiff-base intermediate with substrate; for 3-dehydroquinate dehydratase activity is the Lys1227. Positions 1306–1588 are shikimate dehydrogenase; the sequence is PKELFVVGKP…KAIFDAVTKE (283 aa).

This sequence in the N-terminal section; belongs to the sugar phosphate cyclases superfamily. Dehydroquinate synthase family. The protein in the 2nd section; belongs to the EPSP synthase family. In the 3rd section; belongs to the shikimate kinase family. It in the 4th section; belongs to the type-I 3-dehydroquinase family. This sequence in the C-terminal section; belongs to the shikimate dehydrogenase family. Homodimer. Requires Zn(2+) as cofactor.

It is found in the cytoplasm. The enzyme catalyses 7-phospho-2-dehydro-3-deoxy-D-arabino-heptonate = 3-dehydroquinate + phosphate. It carries out the reaction 3-dehydroquinate = 3-dehydroshikimate + H2O. It catalyses the reaction shikimate + NADP(+) = 3-dehydroshikimate + NADPH + H(+). The catalysed reaction is shikimate + ATP = 3-phosphoshikimate + ADP + H(+). The enzyme catalyses 3-phosphoshikimate + phosphoenolpyruvate = 5-O-(1-carboxyvinyl)-3-phosphoshikimate + phosphate. It functions in the pathway metabolic intermediate biosynthesis; chorismate biosynthesis; chorismate from D-erythrose 4-phosphate and phosphoenolpyruvate: step 2/7. Its pathway is metabolic intermediate biosynthesis; chorismate biosynthesis; chorismate from D-erythrose 4-phosphate and phosphoenolpyruvate: step 3/7. The protein operates within metabolic intermediate biosynthesis; chorismate biosynthesis; chorismate from D-erythrose 4-phosphate and phosphoenolpyruvate: step 4/7. It participates in metabolic intermediate biosynthesis; chorismate biosynthesis; chorismate from D-erythrose 4-phosphate and phosphoenolpyruvate: step 5/7. It functions in the pathway metabolic intermediate biosynthesis; chorismate biosynthesis; chorismate from D-erythrose 4-phosphate and phosphoenolpyruvate: step 6/7. The AROM polypeptide catalyzes 5 consecutive enzymatic reactions in prechorismate polyaromatic amino acid biosynthesis. The sequence is that of Pentafunctional AROM polypeptide from Saccharomyces cerevisiae (strain ATCC 204508 / S288c) (Baker's yeast).